Consider the following 558-residue polypeptide: N-terminal histidine N-methyltransferase (558 aa).

Residues 1–15 (MAPFRSIYEKDATKK) lie on the Cytoplasmic side of the membrane. The helical transmembrane segment at 16–32 (LVVGAALLVLAAFYSYV) threads the bilayer. At 33–49 (FLLTLAPVYGSTPSHIF) the chain is on the lumenal side. A helical membrane pass occupies residues 50–65 (HGYGVGIAGVAGWFSK). The Cytoplasmic segment spans residues 66-77 (DIVDRVSGRKAI). A helical membrane pass occupies residues 78–96 (YAIPVLAFFLPVVQYFVSQ). Topologically, residues 97–104 (QSSALGNP) are lumenal. A helical transmembrane segment spans residues 105-131 (AGPIFTEVLALYPLVLLSVACAGKLVQ). The Cytoplasmic segment spans residues 132 to 145 (AGLNLQRHGDLVAE). The chain crosses the membrane as a helical span at residues 146–169 (HIPLLGSYVIYSAGEHLIKAFLSR). The Lumenal segment spans residues 170-172 (FIG). The helical transmembrane segment at 173–194 (STVLLSRAGLQILIAIFYAAAV) threads the bilayer. At 195–197 (PSK) the chain is on the cytoplasmic side. Residues 198 to 215 (ALLLAIPAFLFSVTSNTH) form a helical membrane-spanning segment. Over 216 to 558 (LPLGHTTTAL…VLPDRVWEGW (343 aa)) the chain is Lumenal.

It belongs to the methyltransferase superfamily.

The protein localises to the endoplasmic reticulum membrane. It catalyses the reaction L-histidyl-[protein] + S-adenosyl-L-methionine = N(tele)-methyl-L-histidyl-[protein] + S-adenosyl-L-homocysteine + H(+). Protein-histidine N-methyltransferase that specifically mediates 3-methylhistidine (tele-methylhistidine) methylation at 'His-1', which protects the side-chain from oxidative damage. Methylates lytic polysaccharide monooxygenases (LPMOs) destined for secretion, including AN4702. The polypeptide is N-terminal histidine N-methyltransferase (Emericella nidulans (strain FGSC A4 / ATCC 38163 / CBS 112.46 / NRRL 194 / M139) (Aspergillus nidulans)).